The primary structure comprises 204 residues: Leucyl/phenylalanyl-tRNA--protein transferase (204 aa).

It belongs to the L/F-transferase family.

The protein resides in the cytoplasm. The enzyme catalyses N-terminal L-lysyl-[protein] + L-leucyl-tRNA(Leu) = N-terminal L-leucyl-L-lysyl-[protein] + tRNA(Leu) + H(+). It catalyses the reaction N-terminal L-arginyl-[protein] + L-leucyl-tRNA(Leu) = N-terminal L-leucyl-L-arginyl-[protein] + tRNA(Leu) + H(+). It carries out the reaction L-phenylalanyl-tRNA(Phe) + an N-terminal L-alpha-aminoacyl-[protein] = an N-terminal L-phenylalanyl-L-alpha-aminoacyl-[protein] + tRNA(Phe). In terms of biological role, functions in the N-end rule pathway of protein degradation where it conjugates Leu, Phe and, less efficiently, Met from aminoacyl-tRNAs to the N-termini of proteins containing an N-terminal arginine or lysine. In Brucella abortus (strain 2308), this protein is Leucyl/phenylalanyl-tRNA--protein transferase.